Reading from the N-terminus, the 715-residue chain is Lactococcin-A transport/processing ATP-binding protein LcnC (715 aa).

In terms of domain architecture, Peptidase C39 spans 11 to 138; that stretch reads QVDEMDCGCA…SEWTGISLFL (128 aa). The active site involves C17. Transmembrane regions (helical) follow at residues 167–187, 197–217, 237–257, 282–302, 307–327, and 396–416; these read VILN…LGSY, IPNA…LTYI, LAID…MSFF, TILS…ILGL, LFLL…IFTP, and AIIQ…LVIS. In terms of domain architecture, ABC transmembrane type-1 spans 168–450; sequence ILNIVIASFI…IINLQTKLQK (283 aa). The ABC transporter domain occupies 482 to 715; that stretch reads LNMSDISYQY…NGFYEQLYHN (234 aa). ATP is bound at residue 515–522; sequence GMSGSGKS.

Belongs to the ABC transporter superfamily. Bacteriocin (lactococcin) exporter (TC 3.A.1.112.3) family.

It localises to the cell membrane. Involved in the export process of the bacteriocin lactococcin A. The chain is Lactococcin-A transport/processing ATP-binding protein LcnC (lcnC) from Lactococcus lactis subsp. lactis (Streptococcus lactis).